We begin with the raw amino-acid sequence, 488 residues long: Probable glycine dehydrogenase (decarboxylating) subunit 2 (488 aa).

Position 274 is an N6-(pyridoxal phosphate)lysine (Lys274).

This sequence belongs to the GcvP family. C-terminal subunit subfamily. The glycine cleavage system is composed of four proteins: P, T, L and H. In this organism, the P 'protein' is a heterodimer of two subunits. It depends on pyridoxal 5'-phosphate as a cofactor.

It carries out the reaction N(6)-[(R)-lipoyl]-L-lysyl-[glycine-cleavage complex H protein] + glycine + H(+) = N(6)-[(R)-S(8)-aminomethyldihydrolipoyl]-L-lysyl-[glycine-cleavage complex H protein] + CO2. Functionally, the glycine cleavage system catalyzes the degradation of glycine. The P protein binds the alpha-amino group of glycine through its pyridoxal phosphate cofactor; CO(2) is released and the remaining methylamine moiety is then transferred to the lipoamide cofactor of the H protein. The polypeptide is Probable glycine dehydrogenase (decarboxylating) subunit 2 (Listeria welshimeri serovar 6b (strain ATCC 35897 / DSM 20650 / CCUG 15529 / CIP 8149 / NCTC 11857 / SLCC 5334 / V8)).